Reading from the N-terminus, the 174-residue chain is Gamma-crystallin F (174 aa).

Beta/gamma crystallin 'Greek key' domains lie at 2–40 and 41–83; these read GKIT…RVDS and GCWM…HLIP. Residues 84-87 form a connecting peptide region; the sequence is HSSS. 2 Beta/gamma crystallin 'Greek key' domains span residues 88–128 and 129–171; these read HRIR…HVIE and GYWV…RRIM.

The protein belongs to the beta/gamma-crystallin family.

Crystallins are the dominant structural components of the vertebrate eye lens. The polypeptide is Gamma-crystallin F (Crygf) (Rattus norvegicus (Rat)).